A 506-amino-acid chain; its full sequence is 2,3-bisphosphoglycerate-independent phosphoglycerate mutase (506 aa).

Residues aspartate 13 and serine 63 each contribute to the Mn(2+) site. Serine 63 serves as the catalytic Phosphoserine intermediate. Substrate is bound by residues histidine 124, 153–154, arginine 183, arginine 189, 255–258, and lysine 331; these read RD and RADR. The Mn(2+) site is built by aspartate 397, histidine 401, aspartate 438, histidine 439, and histidine 457.

Belongs to the BPG-independent phosphoglycerate mutase family. Monomer. Mn(2+) is required as a cofactor.

It carries out the reaction (2R)-2-phosphoglycerate = (2R)-3-phosphoglycerate. It functions in the pathway carbohydrate degradation; glycolysis; pyruvate from D-glyceraldehyde 3-phosphate: step 3/5. In terms of biological role, catalyzes the interconversion of 2-phosphoglycerate and 3-phosphoglycerate. This chain is 2,3-bisphosphoglycerate-independent phosphoglycerate mutase, found in Ruegeria sp. (strain TM1040) (Silicibacter sp.).